A 36-amino-acid chain; its full sequence is MTATLSNFLWSIFWGGVVVALGAAALTAISRIDRIR.

Residues leucine 9–isoleucine 29 form a helical membrane-spanning segment.

Belongs to the PsbX family. Type 1 subfamily. PSII is composed of 1 copy each of membrane proteins PsbA, PsbB, PsbC, PsbD, PsbE, PsbF, PsbH, PsbI, PsbJ, PsbK, PsbL, PsbM, PsbT, PsbX, Psb30/Ycf12, peripheral proteins PsbO, CyanoQ (PsbQ), PsbU, PsbV and a large number of cofactors. It forms dimeric complexes.

Its subcellular location is the cell inner membrane. Involved in the binding and/or turnover of quinones at the Q(B) site of photosystem II (PSII). PSII is a light-driven water plastoquinone oxidoreductase, using light energy to abstract electrons from H(2)O, generating a proton gradient subsequently used for ATP formation. This Gloeobacter violaceus (strain ATCC 29082 / PCC 7421) protein is Photosystem II reaction center protein X.